A 48-amino-acid chain; its full sequence is Large ribosomal subunit protein eL40 (48 aa).

It belongs to the eukaryotic ribosomal protein eL40 family.

The protein is Large ribosomal subunit protein eL40 of Methanoregula boonei (strain DSM 21154 / JCM 14090 / 6A8).